Consider the following 208-residue polypeptide: Small ribosomal subunit protein uS4 (208 aa).

The segment at 30–49 (KSALEKRPYPPGQHGQRRSK) is disordered. One can recognise an S4 RNA-binding domain in the interval 98 to 161 (RRLDNVVYRM…KNNPQIQRSL (64 aa)).

The protein belongs to the universal ribosomal protein uS4 family. As to quaternary structure, part of the 30S ribosomal subunit. Contacts protein S5. The interaction surface between S4 and S5 is involved in control of translational fidelity.

Its function is as follows. One of the primary rRNA binding proteins, it binds directly to 16S rRNA where it nucleates assembly of the body of the 30S subunit. In terms of biological role, with S5 and S12 plays an important role in translational accuracy. The sequence is that of Small ribosomal subunit protein uS4 from Nitratiruptor sp. (strain SB155-2).